A 280-amino-acid polypeptide reads, in one-letter code: Golgi to ER traffic protein 2 (280 aa).

Residues 1-149 (MPSDREKQRI…IAYNLYQQRK (149 aa)) are Cytoplasmic-facing. The tract at residues 15–59 (RQAKMAKGGASDRLNKILSQGSSVKTSAVSVLDQPQPADHDPEGM) is disordered. Residues 31–43 (ILSQGSSVKTSAV) are compositionally biased toward polar residues. The helical transmembrane segment at 150–170 (VRHRFLVVRMVSILANFVYHF) threads the bilayer. Over 171 to 197 (LTISDFSFSPSANPFIRSIPPTSSVSS) the chain is Lumenal. A helical membrane pass occupies residues 198-217 (FFQIFVAIEAVLVAAYIAAS). Over 218–257 (RNVPSNNNGLLVKGISMAAMFVPKLQRFQPLIMKIIGCWD) the chain is Cytoplasmic. The chain crosses the membrane as a helical span at residues 258 to 278 (TVTFVLNDLGLVVLLFGLISF). The Lumenal portion of the chain corresponds to 279–280 (RR).

This sequence belongs to the GET2 family. In terms of assembly, component of the Golgi to ER traffic (GET) complex, which is composed of GET1, GET2 and GET3. Within the complex, GET1 and GET2 form a heterotetramer which is stabilized by phosphatidylinositol binding and which binds to the GET3 homodimer.

Its subcellular location is the endoplasmic reticulum membrane. The protein localises to the golgi apparatus membrane. Functionally, required for the post-translational delivery of tail-anchored (TA) proteins to the endoplasmic reticulum. Together with GET1, acts as a membrane receptor for soluble GET3, which recognizes and selectively binds the transmembrane domain of TA proteins in the cytosol. The GET complex cooperates with the HDEL receptor ERD2 to mediate the ATP-dependent retrieval of resident ER proteins that contain a C-terminal H-D-E-L retention signal from the Golgi to the ER. The sequence is that of Golgi to ER traffic protein 2 from Meyerozyma guilliermondii (strain ATCC 6260 / CBS 566 / DSM 6381 / JCM 1539 / NBRC 10279 / NRRL Y-324) (Yeast).